The primary structure comprises 449 residues: Guanine/hypoxanthine permease GhxP (449 aa).

At 1-25 (MSTPSARTGGSLDAWFKISQRGSTV) the chain is on the cytoplasmic side. The helical transmembrane segment at 26–49 (RQEVVAGLTTFLAMVYSVIVVPGM) threads the bilayer. At 50 to 59 (LGKAGFPPAA) the chain is on the periplasmic side. A helical membrane pass occupies residues 60–78 (VFVATCLVAGLGSIVMGLW). Residues 79–80 (AN) lie on the Cytoplasmic side of the membrane. Residues 81–97 (LPLAIGCAISLTAFTAF) form a discontinuously helical membrane-spanning segment. Topologically, residues 98–109 (SLVLGQHISVPV) are periplasmic. Residues 110–129 (ALGAVFLMGVLFTVISATGI) traverse the membrane as a helical segment. Over 130–141 (RSWILRNLPHGV) the chain is Cytoplasmic. A helical membrane pass occupies residues 142–162 (AHGTGIGIGLFLLLIAANGVG). The Periplasmic segment spans residues 163–180 (LVIKNPLDGLPVALGDFA). The chain crosses the membrane as a helical span at residues 181–198 (TFPVIMSLVGLAVIIGLE). The Cytoplasmic portion of the chain corresponds to 199-202 (KLKV). The chain crosses the membrane as a helical span at residues 203-222 (PGGILLTIIGISIVGLIFDP). Over 223 to 254 (NVHFSGVFAMPSLSDENGNSLIGSLDIMGALN) the chain is Periplasmic. The helical transmembrane segment at 255-283 (PVVLPSVLALVMTAVFDATGTIRAVAGQA) threads the bilayer. Over 284 to 296 (NLLDKDGQIIDGG) the chain is Cytoplasmic. The helical transmembrane segment at 297-312 (KALTTDSMSSVFSGLV) threads the bilayer. Residues 313 to 314 (GA) are Periplasmic-facing. Residues 315-330 (APAAVYIESAAGTAAG) traverse the membrane as a discontinuously helical segment. Residues 331-334 (GKTG) are Cytoplasmic-facing. The chain crosses the membrane as a helical span at residues 335-349 (LTAITVGVLFLLILF). Residues 350 to 360 (LSPLSYLVPGY) lie on the Periplasmic side of the membrane. Residues 361 to 380 (ATAPALMYVGLLMLSNVAKI) form a helical membrane-spanning segment. Topologically, residues 381–385 (DFADF) are cytoplasmic. The segment at residues 386–421 (VDAMAGLVTAVFIVLTCNIVTGIMIGFATLVIGRLV) is an intramembrane region (discontinuously helical). Residues 422 to 449 (SGEWRKLNIGTVVIAVALVTFYAGGWAI) lie on the Cytoplasmic side of the membrane.

Belongs to the nucleobase:cation symporter-2 (NCS2) (TC 2.A.40) family. Azg-like subfamily.

The protein localises to the cell inner membrane. High-affinity transporter for guanine and hypoxanthine. This Escherichia coli O157:H7 protein is Guanine/hypoxanthine permease GhxP (ghxP).